Consider the following 1047-residue polypeptide: Carbamoyl phosphate synthase arginine-specific large chain (1047 aa).

The carboxyphosphate synthetic domain stretch occupies residues 1–401 (MPKRTDIQSV…GLQKAVRSLE (401 aa)). ATP-binding residues include R129, R169, G175, G176, K208, I210, E215, G241, V242, H243, Q284, and E298. In terms of domain architecture, ATP-grasp 1 spans 133 to 327 (RQLMHELHEP…IARMAAKLSL (195 aa)). Mg(2+)-binding residues include Q284, E298, and N300. Mn(2+) is bound by residues Q284, E298, and N300. Residues 402 to 549 (IKTHGLSLPS…YSSWTGENDL (148 aa)) form an oligomerization domain region. The segment at 550 to 933 (LLPEKAKERV…AFRKAFAWGE (384 aa)) is carbamoyl phosphate synthetic domain. The region spanning 676 to 865 (YEFMRSVEVP…LITYTIDVLF (190 aa)) is the ATP-grasp 2 domain. Residues R712, A750, E756, G781, V782, H783, S784, Q824, and E836 each coordinate ATP. Positions 824, 836, and 838 each coordinate Mg(2+). 3 residues coordinate Mn(2+): Q824, E836, and N838. The tract at residues 934-1047 (EQTPALFRKK…PFLLPDVVMN (114 aa)) is allosteric domain. Residues 937–1047 (PALFRKKGSV…PFLLPDVVMN (111 aa)) enclose the MGS-like domain.

Belongs to the CarB family. In terms of assembly, composed of two chains; the small (or glutamine) chain promotes the hydrolysis of glutamine to ammonia, which is used by the large (or ammonia) chain to synthesize carbamoyl phosphate. Tetramer of heterodimers (alpha,beta)4. Mg(2+) is required as a cofactor. It depends on Mn(2+) as a cofactor.

It catalyses the reaction hydrogencarbonate + L-glutamine + 2 ATP + H2O = carbamoyl phosphate + L-glutamate + 2 ADP + phosphate + 2 H(+). The enzyme catalyses hydrogencarbonate + NH4(+) + 2 ATP = carbamoyl phosphate + 2 ADP + phosphate + 2 H(+). Its pathway is amino-acid biosynthesis; L-arginine biosynthesis; carbamoyl phosphate from bicarbonate: step 1/1. Its function is as follows. Large subunit of the glutamine-dependent carbamoyl phosphate synthetase (CPSase). CPSase catalyzes the formation of carbamoyl phosphate from the ammonia moiety of glutamine, carbonate, and phosphate donated by ATP, constituting the first step of the biosynthetic pathway leading to arginine and/or urea. The large subunit (synthetase) binds the substrates ammonia (free or transferred from glutamine from the small subunit), hydrogencarbonate and ATP and carries out an ATP-coupled ligase reaction, activating hydrogencarbonate by forming carboxy phosphate which reacts with ammonia to form carbamoyl phosphate. The sequence is that of Carbamoyl phosphate synthase arginine-specific large chain from Halalkalibacterium halodurans (strain ATCC BAA-125 / DSM 18197 / FERM 7344 / JCM 9153 / C-125) (Bacillus halodurans).